The primary structure comprises 664 residues: Intraflagellar transport protein 70A1 (664 aa).

7 TPR repeats span residues 11–44 (DGEF…SSRS), 45–78 (RAGL…HPEL), 153–186 (PDGL…SGYQ), 188–220 (DLSY…GIRQ), 393–423 (TKQV…EKYI), 424–456 (PVLM…CNDH), and 458–491 (VWKL…NYDN). The stretch at 507–534 (YIMTSQNEEAEELMRKIEKEEEQLSYGD) forms a coiled coil. Residues 543–576 (CIVNLVIGTLYCAKGNYDFGISRVIKSLEPYHKK) form a TPR 8 repeat.

It belongs to the TTC30/dfy-1/fleer family. In terms of assembly, interacts wit the IFT B complex component IFT52.

It is found in the cell projection. The protein resides in the cilium. Functionally, required for polyglutamylation of axonemal tubulin. Plays a role in anterograde intraflagellar transport (IFT), the process by which cilia precursors are transported from the base of the cilium to the site of their incorporation at the tip. The chain is Intraflagellar transport protein 70A1 (Ift70a1) from Mus musculus (Mouse).